Here is a 176-residue protein sequence, read N- to C-terminus: Late embryogenesis abundant protein 49 (176 aa).

2 consecutive SMP domains span residues Thr-49–Lys-106 and Asn-115–His-171.

The protein belongs to the LEA type SMP family.

The protein resides in the cytoplasm. Its subcellular location is the nucleus. LEA proteins are late embryonic proteins abundant in higher plant seed embryos. The function of those proteins is not known. The polypeptide is Late embryogenesis abundant protein 49 (Arabidopsis thaliana (Mouse-ear cress)).